The following is a 2496-amino-acid chain: Hornerin (2496 aa).

The S-100-like stretch occupies residues Met1–Leu81. EF-hand domains are found at residues Asp13–Pro48 and Asp49–Ala84. Ca(2+)-binding residues include Met27, Glu32, Asp62, Asp64, Asn66, Lys68, and Glu73. The segment at Thr82–Gly98 is s (spacer). Residues Ser97–Gly2496 are disordered. The 1; truncated repeat unit spans residues Ser99–Lys145. Residues Gln107–Lys123 show a composition bias toward basic and acidic residues. Residues Gly124 to Asp134 show a composition bias toward polar residues. Basic residues predominate over residues Asn144–Lys153. 27 consecutive repeat copies span residues Ser146 to His231, Gly232 to Ser321, Ser326 to Tyr400, Gly401 to Gly491, Gln492 to Tyr577, Gly578 to Arg668, His669 to Cys748, Gly749 to Gly839, Gln840 to Tyr926, Gly927 to Arg1017, His1018 to Cys1097, Gly1098 to Gly1188, Gln1189 to Tyr1274, Gly1275 to Arg1365, His1366 to Cys1445, Gly1446 to Gly1536, Gln1537 to Tyr1622, Gly1623 to Arg1713, His1714 to Cys1793, Gly1794 to Gly1884, Gln1885 to Tyr1970, Gly1971 to Arg2061, His2062 to Cys2141, Gly2142 to Arg2232, His2233 to Tyr2312, Gly2313 to Arg2403, and Gln2410 to Gly2496. Low complexity-rich tracts occupy residues Ser183–Pro194, Ser200–Ser246, and Arg270–Pro286. Polar residues-rich tracts occupy residues Arg294–Gly319 and Ser326–Ser355. Composition is skewed to low complexity over residues Val362 to Gly379, Ser394 to Ser415, and Ser423 to Gly448. The span at Ser449–Gln464 shows a compositional bias: gly residues. Residues Gly465–Gly565 show a composition bias toward low complexity. 2 positions are modified to phosphoserine: Ser506 and Ser508. Positions Ser566–Arg576 are enriched in gly residues. Composition is skewed to low complexity over residues Tyr577–Thr593 and Ser600–Gly625. Positions Ser626–Gln641 are enriched in gly residues. Low complexity-rich tracts occupy residues Gly642–Gly670 and Ser679–Ser713. Arg646 bears the Omega-N-methylarginine mark. Ser716 is subject to Phosphoserine. A compositionally biased stretch (low complexity) spans Gly723 to Gly736. Positions Ser737–Arg747 are enriched in gly residues. Composition is skewed to low complexity over residues Cys748–Thr764, Ser771–Gly796, Gly804–Ala884, and Ser891–Gly914. Ser815 is modified (phosphoserine). The segment covering Ser915 to Arg925 has biased composition (gly residues). Low complexity-rich tracts occupy residues Tyr926–Thr942 and Ser949–Gly974. Over residues Ser975 to Gln990 the composition is skewed to gly residues. 3 stretches are compositionally biased toward low complexity: residues Gly991–Gly1019, Ser1028–Ser1062, and Gly1072–Gly1085. Residue Arg995 is modified to Omega-N-methylarginine. Residues Ser1086 to Arg1096 are compositionally biased toward gly residues. Low complexity-rich tracts occupy residues Cys1097 to Thr1113, Ser1120 to Gly1145, and Gly1153 to Gly1262. Residue Ser1229 is modified to Phosphoserine. Gly residues predominate over residues Ser1263–Arg1273. Positions Thr1281–Tyr1292 are enriched in polar residues. The segment covering Gly1298–Gly1322 has biased composition (low complexity). Residues Ser1323–Gln1338 show a composition bias toward gly residues. 3 stretches are compositionally biased toward low complexity: residues Gly1339–Gly1367, Ser1376–Ser1410, and Gly1420–Gly1433. At Arg1343 the chain carries Omega-N-methylarginine. Residues Ser1434–Arg1444 are compositionally biased toward gly residues. 3 stretches are compositionally biased toward low complexity: residues Cys1445 to Thr1461, Ser1468 to Gly1493, and Gly1501 to Gly1610. Residues Ser1551 and Ser1553 each carry the phosphoserine modification. Positions Ser1611–Arg1621 are enriched in gly residues. 2 stretches are compositionally biased toward low complexity: residues Tyr1622–Gly1631 and Ser1645–Gly1670. Ser1650 carries the post-translational modification Phosphoserine. Residues Ser1671–Gln1686 show a composition bias toward gly residues. Low complexity-rich tracts occupy residues Gly1687–Gly1715, Ser1724–Ser1758, and Gly1768–Gly1781. Arg1691 is modified (omega-N-methylarginine). Residues Ser1782 to Arg1792 show a composition bias toward gly residues. Residues Thr1800–Tyr1811 are compositionally biased toward polar residues. 2 stretches are compositionally biased toward low complexity: residues Ser1816–Gly1841 and Gly1849–Gly1958. A compositionally biased stretch (gly residues) spans Ser1959–Arg1969. Low complexity-rich tracts occupy residues Tyr1970 to Thr1986 and Ser1993 to Gly2018. The residue at position 2011 (Ser2011) is a Phosphoserine. The segment covering Ser2019 to Gln2034 has biased composition (gly residues). 2 stretches are compositionally biased toward low complexity: residues Gly2035 to Gly2063 and Ser2072 to Ser2106. At Arg2039 the chain carries Omega-N-methylarginine. A phosphoserine mark is found at Ser2109 and Ser2124. The span at Gly2116–Gly2129 shows a compositional bias: low complexity. Gly residues predominate over residues Ser2130 to Arg2140. Low complexity-rich tracts occupy residues Cys2141–Thr2157 and Ser2164–Gly2189. Positions Ser2190–Gln2205 are enriched in gly residues. Low complexity-rich tracts occupy residues Gly2206 to Gly2234 and Ser2243 to Gly2300. Arg2210 bears the Omega-N-methylarginine mark. The segment covering Ser2301 to Arg2311 has biased composition (gly residues). Low complexity-rich tracts occupy residues Tyr2312–Thr2328 and Ser2335–Gly2360. Ser2353 carries the phosphoserine modification. The span at Ser2361–Gln2376 shows a compositional bias: gly residues. Low complexity-rich tracts occupy residues Gly2377–Gly2405, Ser2414–Ser2448, and Gly2458–Gly2471. Arg2381 bears the Omega-N-methylarginine mark. Over residues Ser2472 to Arg2482 the composition is skewed to gly residues.

Belongs to the S100-fused protein family. It in the N-terminal section; belongs to the S-100 family. Processed during the process of epidermal differentiation. Post-translationally, forms covalent cross-links mediated by transglutaminase TGM3, between glutamine and the epsilon-amino group of lysine residues (in vitro). Embryonic skin. Highest level in the adult forestomach followed by the skin. Lower levels in the tongue, esophagus. Detected in the granular and cornified layers of the mature epidermis.

It is found in the cytoplasmic granule. In terms of biological role, component of the epidermal cornified cell envelopes. This chain is Hornerin (Hrnr), found in Mus musculus (Mouse).